The chain runs to 446 residues: Tol-Pal system protein TolB (446 aa).

A signal peptide spans 1-24 (MKRAFLSALSVGLAALFLTGPAQA).

This sequence belongs to the TolB family. The Tol-Pal system is composed of five core proteins: the inner membrane proteins TolA, TolQ and TolR, the periplasmic protein TolB and the outer membrane protein Pal. They form a network linking the inner and outer membranes and the peptidoglycan layer.

The protein localises to the periplasm. Its function is as follows. Part of the Tol-Pal system, which plays a role in outer membrane invagination during cell division and is important for maintaining outer membrane integrity. The sequence is that of Tol-Pal system protein TolB from Dinoroseobacter shibae (strain DSM 16493 / NCIMB 14021 / DFL 12).